Reading from the N-terminus, the 404-residue chain is Propionate kinase PduW (404 aa).

It belongs to the acetokinase family. PduW subfamily.

It localises to the cytoplasm. It carries out the reaction propanoate + ATP = propanoyl phosphate + ADP. It participates in polyol metabolism; 1,2-propanediol degradation. It functions in the pathway organic acid metabolism; propanoate degradation. Works with phosphate acetyltransferase (pta) to capture exogenous propionate and regenerate propionyl-CoA during degradation of propionate and 1,2-propanediol (1,2-PD). Ectopic expression partially complements a cobB deletion allowing some growth on propionate. Restores growth to an eutQ deletion on ethanolamine and tetrathionate under anoxic conditions. This chain is Propionate kinase PduW, found in Salmonella typhimurium (strain LT2 / SGSC1412 / ATCC 700720).